The following is a 147-amino-acid chain: Small ribosomal subunit protein bS6 (147 aa).

A disordered region spans residues 103–147; it reads AARMAANLPSFPEDEDTEEKGSAPLAREEEGIGEEAQTDEAEDKE. Residues 133–147 show a composition bias toward acidic residues; that stretch reads GIGEEAQTDEAEDKE.

This sequence belongs to the bacterial ribosomal protein bS6 family.

Binds together with bS18 to 16S ribosomal RNA. In Syntrophobacter fumaroxidans (strain DSM 10017 / MPOB), this protein is Small ribosomal subunit protein bS6.